We begin with the raw amino-acid sequence, 498 residues long: Probable cytosol aminopeptidase (498 aa).

Mn(2+)-binding residues include lysine 267 and aspartate 272. Lysine 279 is a catalytic residue. Residues aspartate 290, aspartate 349, and glutamate 351 each contribute to the Mn(2+) site. Arginine 353 is an active-site residue.

It belongs to the peptidase M17 family. It depends on Mn(2+) as a cofactor.

It localises to the cytoplasm. The enzyme catalyses Release of an N-terminal amino acid, Xaa-|-Yaa-, in which Xaa is preferably Leu, but may be other amino acids including Pro although not Arg or Lys, and Yaa may be Pro. Amino acid amides and methyl esters are also readily hydrolyzed, but rates on arylamides are exceedingly low.. The catalysed reaction is Release of an N-terminal amino acid, preferentially leucine, but not glutamic or aspartic acids.. Presumably involved in the processing and regular turnover of intracellular proteins. Catalyzes the removal of unsubstituted N-terminal amino acids from various peptides. The protein is Probable cytosol aminopeptidase of Dechloromonas aromatica (strain RCB).